The sequence spans 268 residues: Tryptophan synthase alpha chain (268 aa).

Active-site proton acceptor residues include E49 and D60.

This sequence belongs to the TrpA family. In terms of assembly, tetramer of two alpha and two beta chains.

The enzyme catalyses (1S,2R)-1-C-(indol-3-yl)glycerol 3-phosphate + L-serine = D-glyceraldehyde 3-phosphate + L-tryptophan + H2O. It participates in amino-acid biosynthesis; L-tryptophan biosynthesis; L-tryptophan from chorismate: step 5/5. In terms of biological role, the alpha subunit is responsible for the aldol cleavage of indoleglycerol phosphate to indole and glyceraldehyde 3-phosphate. The sequence is that of Tryptophan synthase alpha chain from Vibrio vulnificus (strain YJ016).